A 518-amino-acid chain; its full sequence is Protein nucleotidyltransferase YdiU (518 aa).

8 residues coordinate ATP: G99, G101, R102, K122, D134, G135, R192, and R199. The active-site Proton acceptor is D270. Mg(2+) is bound by residues N271 and D280. Position 280 (D280) interacts with ATP.

Belongs to the SELO family. The cofactor is Mg(2+). Mn(2+) is required as a cofactor.

It carries out the reaction L-seryl-[protein] + ATP = 3-O-(5'-adenylyl)-L-seryl-[protein] + diphosphate. The enzyme catalyses L-threonyl-[protein] + ATP = 3-O-(5'-adenylyl)-L-threonyl-[protein] + diphosphate. It catalyses the reaction L-tyrosyl-[protein] + ATP = O-(5'-adenylyl)-L-tyrosyl-[protein] + diphosphate. The catalysed reaction is L-histidyl-[protein] + UTP = N(tele)-(5'-uridylyl)-L-histidyl-[protein] + diphosphate. It carries out the reaction L-seryl-[protein] + UTP = O-(5'-uridylyl)-L-seryl-[protein] + diphosphate. The enzyme catalyses L-tyrosyl-[protein] + UTP = O-(5'-uridylyl)-L-tyrosyl-[protein] + diphosphate. In terms of biological role, nucleotidyltransferase involved in the post-translational modification of proteins. It can catalyze the addition of adenosine monophosphate (AMP) or uridine monophosphate (UMP) to a protein, resulting in modifications known as AMPylation and UMPylation. The chain is Protein nucleotidyltransferase YdiU from Methylobacillus flagellatus (strain ATCC 51484 / DSM 6875 / VKM B-1610 / KT).